Reading from the N-terminus, the 162-residue chain is MKEVKVGIGDYAVGKGNGIISTYGLGSCVGITLYDRVTKVGGLLHALLPEAARYGHRGNPAKYVDTGLQLLLKEVIKLGASKFRLEAKLFGGAQMFDNIRSEELKIGEKNVQVAKRELRKLGIRLVAEDTGGKGGRTIYLDLSTGKVRMRKVTEGKVIEKVY.

The protein belongs to the CheD family.

It carries out the reaction L-glutaminyl-[protein] + H2O = L-glutamyl-[protein] + NH4(+). Probably deamidates glutamine residues to glutamate on methyl-accepting chemotaxis receptors (MCPs), playing an important role in chemotaxis. The chain is Probable chemoreceptor glutamine deamidase CheD from Pyrococcus horikoshii (strain ATCC 700860 / DSM 12428 / JCM 9974 / NBRC 100139 / OT-3).